Consider the following 454-residue polypeptide: Protein IQ-DOMAIN 1 (454 aa).

Residues 103–113 are calmodulin-binding; it reads GKSKEEAAAIL. The region spanning 107–136 is the IQ domain; the sequence is EEAAAILIQSTFRGHLARRESQVMRGQERL. Residues 272–454 are disordered; that stretch reads WESSEKEQNT…KGVLKAERTP (183 aa). Residues 280-328 show a composition bias toward polar residues; sequence NTTNNDNSSVKNSTNRNSQGGETAKSSNRNKLNSSTKPNTPSASSTATR. Basic and acidic residues predominate over residues 343–356; that stretch reads KSSDDEAKSSERNR. The segment covering 371-388 has biased composition (polar residues); that stretch reads LSSSTARRSSNLIPTTKS. Low complexity predominate over residues 397–412; it reads TSSRVAVTTSTTEESS. The short motif at 421-428 is the Nuclear localization signal element; it reads KKRLSTSA. Residues 442 to 454 show a composition bias toward basic and acidic residues; sequence KVEKGVLKAERTP.

The protein belongs to the IQD family. As to quaternary structure, binds to multiple calmodulin (CaM) in the presence of Ca(2+)(e.g. CaM1 and CaM2) and CaM-like (e.g. CML8 and CML9) proteins. Interacts with KLCR1. Expressed in roots, flowers, stems, siliques, inflorescence stems and whole shoots. Restricted to the vascular bundles.

Its subcellular location is the nucleus. The protein resides in the nucleolus. It localises to the cytoplasm. It is found in the cytoskeleton. May be involved in cooperative interactions with calmodulins or calmodulin-like proteins. Modulates expression of glucosinolate pathway genes. May associate with nucleic acids and regulate gene expression at the transcriptional or post-transcriptional level. Recruits KLCR1 and calmodulin proteins to microtubules, thus being a potential scaffold in cellular signaling and trafficking. The chain is Protein IQ-DOMAIN 1 from Arabidopsis thaliana (Mouse-ear cress).